Consider the following 461-residue polypeptide: tRNA modification GTPase MnmE (461 aa).

Positions 21, 87, and 126 each coordinate (6S)-5-formyl-5,6,7,8-tetrahydrofolate. One can recognise a TrmE-type G domain in the interval 222 to 384 (QSTVVLYGEP…LLELLKSKLT (163 aa)). Asn232 is a K(+) binding site. Residues 232-237 (NTGKSS), 251-257 (SDVPGTT), and 276-279 (DTAG) each bind GTP. Ser236 contacts Mg(2+). The K(+) site is built by Ser251, Val253, and Thr256. Thr257 contributes to the Mg(2+) binding site. Position 461 (Lys461) interacts with (6S)-5-formyl-5,6,7,8-tetrahydrofolate.

This sequence belongs to the TRAFAC class TrmE-Era-EngA-EngB-Septin-like GTPase superfamily. TrmE GTPase family. In terms of assembly, homodimer. Heterotetramer of two MnmE and two MnmG subunits. The cofactor is K(+).

Its subcellular location is the cytoplasm. Exhibits a very high intrinsic GTPase hydrolysis rate. Involved in the addition of a carboxymethylaminomethyl (cmnm) group at the wobble position (U34) of certain tRNAs, forming tRNA-cmnm(5)s(2)U34. In Leptospira biflexa serovar Patoc (strain Patoc 1 / Ames), this protein is tRNA modification GTPase MnmE.